The chain runs to 139 residues: Cofilin (139 aa).

In terms of domain architecture, ADF-H spans 4 to 135 (GVKVSQECLD…SYDTVLDKVS (132 aa)).

Belongs to the actin-binding proteins ADF family.

The protein localises to the cytoplasm. Its subcellular location is the cytoskeleton. It is found in the nucleus matrix. Controls reversibly actin polymerization and depolymerization in a pH-sensitive manner. It has the ability to bind G- and F-actin in a 1:1 ratio of cofilin to actin. Binding to F-actin is regulated by tropomyosin. It is the major component of intranuclear and cytoplasmic actin rods. Required for accumulation of actin at the cell division site via depolymerizing actin at the cell ends. In association with myosin II has a role in the assembly of the contractile ring via severing actin filaments. Involved in the maintenance of the contractile ring once formed. In association with profilin and capping protein, has a role in the mitotic reorganization of the actin cytoskeleton. The chain is Cofilin (COF1) from Mycosarcoma maydis (Corn smut fungus).